The chain runs to 276 residues: Large ribosomal subunit protein uL2 (276 aa).

The interval 223–276 (GSAMNPVDHPHGGGEGKAPIGHPGPLTPWGKPTLGYKTRKKNKPSDKFIVKRRK) is disordered. The segment covering 265 to 276 (KPSDKFIVKRRK) has biased composition (basic and acidic residues).

It belongs to the universal ribosomal protein uL2 family. As to quaternary structure, part of the 50S ribosomal subunit. Forms a bridge to the 30S subunit in the 70S ribosome.

Its function is as follows. One of the primary rRNA binding proteins. Required for association of the 30S and 50S subunits to form the 70S ribosome, for tRNA binding and peptide bond formation. It has been suggested to have peptidyltransferase activity; this is somewhat controversial. Makes several contacts with the 16S rRNA in the 70S ribosome. The chain is Large ribosomal subunit protein uL2 from Caldicellulosiruptor saccharolyticus (strain ATCC 43494 / DSM 8903 / Tp8T 6331).